Here is a 385-residue protein sequence, read N- to C-terminus: SH3 domain-binding protein 5-like (385 aa).

The segment at 1 to 58 (MAELRQIPGGRETPQGELRPEVVEDEVPRSPVAEEPGGGGSNSSEAKLSPREEEELDP) is disordered. Phosphothreonine is present on Thr-13. Residues 18 to 28 (LRPEVVEDEVP) are compositionally biased toward basic and acidic residues. Ser-30 and Ser-49 each carry phosphoserine. Coiled coils occupy residues 59-140 (RIQE…YERA) and 169-272 (WQEM…EQIH). The segment at 272-328 (HARRRGQPAHTPGQRRSSPVGAEAGPDGGEDADSGIIEGAEGGGLEEGVSLGPGAAP) is disordered. Over residues 318-328 (EGVSLGPGAAP) the composition is skewed to low complexity. Residues Ser-343, Ser-350, Ser-358, and Ser-362 each carry the phosphoserine modification. The interval 359–385 (DHTSLDGQELGPRSGGRGGRHQRSISL) is disordered. Over residues 376-385 (GGRHQRSISL) the composition is skewed to basic residues.

Belongs to the SH3BP5 family.

Functionally, functions as a guanine nucleotide exchange factor (GEF) for RAB11A. This Bos taurus (Bovine) protein is SH3 domain-binding protein 5-like (SH3BP5L).